The following is a 232-amino-acid chain: Platelet-activating factor acetylhydrolase IB subunit alpha1 (232 aa).

Position 2 is an N-acetylserine (Ser2). Phosphoserine is present on Ser2. Active-site residues include Ser47, Asp192, and His195.

The protein belongs to the 'GDSL' lipolytic enzyme family. Platelet-activating factor acetylhydrolase IB beta/gamma subunits subfamily. Forms a catalytic dimer which is either homodimer (alpha1/alpha1 homodimer) or heterodimer with PAFAH1B2 (alpha1/alpha2 heterodimer). Component of the cytosolic (PAF-AH (I)) heterotetrameric enzyme, which is composed of PAFAH1B1 (beta), PAFAH1B2 (alpha2) and PAFAH1B3 (alpha1) subunits. The catalytic activity of the enzyme resides in the alpha1 (PAFAH1B3) and alpha2 (PAFAH1B2) subunits, whereas the beta subunit (PAFAH1B1) has regulatory activity. Trimer formation is not essential for the catalytic activity. Interacts with VLDLR; this interaction may modulate the Reelin pathway.

It is found in the cytoplasm. The enzyme catalyses a 1-O-alkyl-2-acetyl-sn-glycero-3-phosphocholine + H2O = a 1-O-alkyl-sn-glycero-3-phosphocholine + acetate + H(+). It carries out the reaction 1-O-hexadecyl-2-acetyl-sn-glycero-3-phosphocholine + H2O = 1-O-hexadecyl-sn-glycero-3-phosphocholine + acetate + H(+). The catalysed reaction is 1-O-hexadecyl-2-acetyl-sn-glycero-3-phosphate + H2O = 1-O-hexadecyl-sn-glycero-3-phosphate + acetate + H(+). Its activity is regulated as follows. Beta subunit (PAFAH1B1) inhibits the acetylhydrolase activity of the alpha1/alpha1 catalytic homodimer. Alpha1 catalytic subunit of the cytosolic type I platelet-activating factor (PAF) acetylhydrolase (PAF-AH (I)) heterotetrameric enzyme that catalyzes the hydrolyze of the acetyl group at the sn-2 position of PAF and its analogs and modulates the action of PAF. The activity and substrate specificity of PAF-AH (I) are affected by its subunit composition. Both alpha1/alpha1 homodimer (PAFAH1B3/PAFAH1B3 homodimer) and alpha1/alpha2 heterodimer(PAFAH1B3/PAFAH1B2 heterodimer) hydrolyze 1-O-alkyl-2-acetyl-sn-glycero-3-phosphoric acid (AAGPA) more efficiently than PAF, but they have little hydrolytic activity towards 1-O-alkyl-2-acetyl-sn-glycero-3-phosphorylethanolamine (AAGPE). Plays an important role during the development of brain. The polypeptide is Platelet-activating factor acetylhydrolase IB subunit alpha1 (Bos taurus (Bovine)).